A 908-amino-acid polypeptide reads, in one-letter code: Zinc finger and BTB domain-containing protein 41 (908 aa).

A disordered region spans residues 38 to 59; it reads TQAPERPTPEAAQRCQELPPSP. The 65-residue stretch at 89–153 folds into the BTB domain; sequence CDLLIIVEGK…LYTSEFFVYK (65 aa). The segment at 208-231 adopts a C2H2-type 1 zinc-finger fold; it reads HQCKFCSRHFCYKKSLENHLAKTH. Basic residues predominate over residues 252 to 261; that stretch reads RRSKRNRKCP. Residues 252 to 344 form a disordered region; that stretch reads RRSKRNRKCP…EAGDSAGSIH (93 aa). A compositionally biased stretch (acidic residues) spans 267 to 276; sequence TSDDEQESGD. Residues 279-296 are compositionally biased toward basic and acidic residues; it reads DNLHQESSEKERSDRNDS. Over residues 297–336 the composition is skewed to acidic residues; the sequence is EDPGSEYNAEDEELEEEVSDEDSDTEQSDKDNDAEEEPEA. 13 consecutive C2H2-type zinc fingers follow at residues 360–382, 388–410, 421–444, 462–484, 490–513, 517–540, 546–568, 574–596, 602–624, 630–653, 667–689, 695–717, and 723–746; these read LQCP…TRVH, FECD…RKKH, HKCP…KRFH, WKCD…MILH, FKCT…EKFH, FPCD…ECTH, WTCF…LRIH, HLCS…LRVH, YECD…KKIH, HQCE…KSVH, HQCD…FRTH, YKCQ…LVIH, and FNCQ…DHVH.

It is found in the nucleus. Functionally, may be involved in transcriptional regulation. The sequence is that of Zinc finger and BTB domain-containing protein 41 (Zbtb41) from Mus musculus (Mouse).